A 368-amino-acid polypeptide reads, in one-letter code: GDSL esterase/lipase At4g16230 (368 aa).

The signal sequence occupies residues 1-24 (MSLLVFLCQIIVLSVLFFSEVCLA). The active-site Nucleophile is the serine 37. N-linked (GlcNAc...) asparagine glycosylation is found at asparagine 117 and asparagine 286. Residues aspartate 329 and histidine 332 contribute to the active site.

Belongs to the 'GDSL' lipolytic enzyme family.

It localises to the secreted. This chain is GDSL esterase/lipase At4g16230, found in Arabidopsis thaliana (Mouse-ear cress).